Reading from the N-terminus, the 215-residue chain is Protein transport protein sec22 (215 aa).

Over 1-194 the chain is Cytoplasmic; the sequence is MVKSTTVTRL…RVNLEALWRQ (194 aa). The Longin domain maps to 9 to 118; the sequence is RLDGLPLAAS…YAFVQFDTFM (110 aa). The v-SNARE coiled-coil homology domain maps to 133-193; it reads NLDKLNTELK…RRVNLEALWR (61 aa). A helical; Anchor for type IV membrane protein transmembrane segment spans residues 195-215; that stretch reads YGPVSIIALLFLIFVYWRFFA.

Belongs to the synaptobrevin family. Component of two distinct SNARE complexes consisting of sed5, bos1, bet1 and sec22 or ufe1, use1, sec20 and sec22. Ykt6 can probably replace sec22 as subunit of either complex.

The protein resides in the membrane. The protein localises to the endoplasmic reticulum membrane. Its subcellular location is the golgi apparatus membrane. Functionally, nonessential SNARE involved in targeting and fusion of ER-derived transport vesicles with the Golgi complex as well as Golgi-derived retrograde transport vesicles with the ER. The chain is Protein transport protein sec22 (sec22) from Schizosaccharomyces pombe (strain 972 / ATCC 24843) (Fission yeast).